The chain runs to 159 residues: Ribosomal RNA large subunit methyltransferase H (159 aa).

Leu-76 and Gly-108 together coordinate S-adenosyl-L-methionine.

This sequence belongs to the RNA methyltransferase RlmH family. Homodimer.

It is found in the cytoplasm. It carries out the reaction pseudouridine(1915) in 23S rRNA + S-adenosyl-L-methionine = N(3)-methylpseudouridine(1915) in 23S rRNA + S-adenosyl-L-homocysteine + H(+). Functionally, specifically methylates the pseudouridine at position 1915 (m3Psi1915) in 23S rRNA. The chain is Ribosomal RNA large subunit methyltransferase H from Ligilactobacillus salivarius (strain UCC118) (Lactobacillus salivarius).